Reading from the N-terminus, the 540-residue chain is Pentatricopeptide repeat-containing protein At1g14470 (540 aa).

PPR repeat units lie at residues 70–104, 105–134, 135–165, 166–196, 197–227, 228–262, 263–297, 298–328, 330–364, 365–395, 397–431, 432–462, 463–497, and 498–528; these read NVFVVNSMFKYFSKMDMANDVLRLYEQRSRCGIMP, DAFSFPVVIKSAGRFGILFQALVEKLGFFK, DPYVRNVIMDMYVKHESVESARKVFDQISQR, KGSDWNVMISGYWKWGNKEEACKLFDMMPEN, DVVSWTVMITGFAKVKDLENARKYFDRMPEK, SVVSWNAMLSGYAQNGFTEDALRLFNDMLRLGVRP, NETTWVIVISACSFRADPSLTRSLVKLIDEKRVRL, NCFVKTALLDMHAKCRDIQSARRIFNELGTQ, NLVTWNAMISGYTRIGDMSSARQLFDTMPKRNVVS, WNSLIAGYAHNGQAALAIEFFEDMIDYGDSK, DEVTMISVLSACGHMADLELGDCIVDYIRKNQIKL, NDSGYRSLIFMYARGGNLWEAKRVFDEMKER, DVVSYNTLFTAFAANGDGVETLNLLSKMKDEGIEP, and DRVTYTSVLTACNRAGLLKEGQRIFKSIRNP.

The protein belongs to the PPR family. PCMP-A subfamily.

This is Pentatricopeptide repeat-containing protein At1g14470 (PCMP-A4) from Arabidopsis thaliana (Mouse-ear cress).